A 329-amino-acid polypeptide reads, in one-letter code: Quinate dehydrogenase (329 aa).

The catalysed reaction is L-quinate + NAD(+) = 3-dehydroquinate + NADH + H(+). The protein operates within aromatic compound metabolism; 3,4-dihydroxybenzoate biosynthesis; 3-dehydroquinate from D-quinate (NAD(+) route): step 1/1. The protein is Quinate dehydrogenase (qutB) of Emericella nidulans (strain FGSC A4 / ATCC 38163 / CBS 112.46 / NRRL 194 / M139) (Aspergillus nidulans).